The sequence spans 586 residues: Arginine--tRNA ligase (586 aa).

A 'HIGH' region motif is present at residues 128–138; the sequence is ANPTGPLHVGH.

This sequence belongs to the class-I aminoacyl-tRNA synthetase family. In terms of assembly, monomer.

The protein resides in the cytoplasm. The enzyme catalyses tRNA(Arg) + L-arginine + ATP = L-arginyl-tRNA(Arg) + AMP + diphosphate. This Coxiella burnetii (strain RSA 331 / Henzerling II) protein is Arginine--tRNA ligase.